The chain runs to 492 residues: GTPase Der (492 aa).

EngA-type G domains are found at residues 3–166 and 205–378; these read PVVA…MDDV and IKLA…DSST. GTP contacts are provided by residues 9 to 16, 56 to 60, 118 to 121, 211 to 218, 258 to 262, and 323 to 326; these read GRPNVGKS, DTGGI, NKTD, DTAGV, and NKWD. A KH-like domain is found at 379-463; that stretch reads RRVSTALLTR…PIRIQFKEGA (85 aa).

Belongs to the TRAFAC class TrmE-Era-EngA-EngB-Septin-like GTPase superfamily. EngA (Der) GTPase family. Associates with the 50S ribosomal subunit.

In terms of biological role, GTPase that plays an essential role in the late steps of ribosome biogenesis. The polypeptide is GTPase Der (Cronobacter sakazakii (strain ATCC BAA-894) (Enterobacter sakazakii)).